The chain runs to 188 residues: Crossover junction endodeoxyribonuclease RuvC (188 aa).

Active-site residues include Asp7, Glu68, and Asp141. Asp7, Glu68, and Asp141 together coordinate Mg(2+).

The protein belongs to the RuvC family. As to quaternary structure, homodimer which binds Holliday junction (HJ) DNA. The HJ becomes 2-fold symmetrical on binding to RuvC with unstacked arms; it has a different conformation from HJ DNA in complex with RuvA. In the full resolvosome a probable DNA-RuvA(4)-RuvB(12)-RuvC(2) complex forms which resolves the HJ. It depends on Mg(2+) as a cofactor.

It is found in the cytoplasm. The enzyme catalyses Endonucleolytic cleavage at a junction such as a reciprocal single-stranded crossover between two homologous DNA duplexes (Holliday junction).. Functionally, the RuvA-RuvB-RuvC complex processes Holliday junction (HJ) DNA during genetic recombination and DNA repair. Endonuclease that resolves HJ intermediates. Cleaves cruciform DNA by making single-stranded nicks across the HJ at symmetrical positions within the homologous arms, yielding a 5'-phosphate and a 3'-hydroxyl group; requires a central core of homology in the junction. The consensus cleavage sequence is 5'-(A/T)TT(C/G)-3'. Cleavage occurs on the 3'-side of the TT dinucleotide at the point of strand exchange. HJ branch migration catalyzed by RuvA-RuvB allows RuvC to scan DNA until it finds its consensus sequence, where it cleaves and resolves the cruciform DNA. The protein is Crossover junction endodeoxyribonuclease RuvC of Mycobacterium avium (strain 104).